Here is a 109-residue protein sequence, read N- to C-terminus: FAD assembly factor SdhE (109 aa).

Residues 1-22 are disordered; the sequence is MQDNFTASSPSSSSSASGVAED. A compositionally biased stretch (low complexity) spans 7–17; that stretch reads ASSPSSSSSAS.

It belongs to the SdhE FAD assembly factor family.

It is found in the cytoplasm. Functionally, an FAD assembly protein, which accelerates covalent attachment of the cofactor into other proteins. Plays an essential role in the assembly of succinate dehydrogenase (SDH, respiratory complex II), an enzyme complex that is a component of both the tricarboxylic acid cycle and the electron transport chain, and which couples the oxidation of succinate to fumarate with the reduction of ubiquinone (coenzyme Q) to ubiquinol. Required for flavinylation of SdhA, when the SDH operon and this gene are overexpressed in G.oxydans. Flavinylation of SdhA is detected only in the presence of sdhE. The sequence is that of FAD assembly factor SdhE from Acetobacter pasteurianus (strain NBRC 105184 / IFO 3283-01).